The following is a 213-amino-acid chain: Pyrrolidone-carboxylate peptidase (213 aa).

Catalysis depends on residues Glu-78, Cys-141, and His-165.

It belongs to the peptidase C15 family. In terms of assembly, homotetramer.

The protein resides in the cytoplasm. The catalysed reaction is Release of an N-terminal pyroglutamyl group from a polypeptide, the second amino acid generally not being Pro.. In terms of biological role, removes 5-oxoproline from various penultimate amino acid residues except L-proline. The protein is Pyrrolidone-carboxylate peptidase of Clostridium perfringens (strain 13 / Type A).